The primary structure comprises 369 residues: N-succinyl-L-Arg/Lys racemase (369 aa).

Substrate is bound by residues Tyr-26, Asp-51, 161–163 (KMK), and 191–193 (DVN). Residues Asp-191, Glu-218, and Asp-243 each coordinate Mg(2+). Residues Lys-267, 295–296 (SM), and 320–322 (ELT) contribute to the substrate site.

The protein belongs to the mandelate racemase/muconate lactonizing enzyme family. Requires Mg(2+) as cofactor.

Functionally, catalyzes efficient racemization of N-succinyl-L-Arg and N-succinyl-L-Lys, suggesting that these are physiological substrates of this enzyme. Has low activity with L-Asp-L-Lys, and even lower activity with L-Leu-L-Arg, L-Leu-L-Lys, N-succinyl-L-His and N-succinyl-L-Met (in vitro). The sequence is that of N-succinyl-L-Arg/Lys racemase from Bacillus cereus (strain ATCC 14579 / DSM 31 / CCUG 7414 / JCM 2152 / NBRC 15305 / NCIMB 9373 / NCTC 2599 / NRRL B-3711).